Here is a 342-residue protein sequence, read N- to C-terminus: Probable dual-specificity RNA methyltransferase RlmN (342 aa).

Residue Glu-91 is the Proton acceptor of the active site. In terms of domain architecture, Radical SAM core spans 97–327 (YRYGNTVCLS…VTVRRELGDE (231 aa)). The cysteines at positions 104 and 332 are disulfide-linked. Residues Cys-111, Cys-115, and Cys-118 each contribute to the [4Fe-4S] cluster site. S-adenosyl-L-methionine is bound by residues 158–159 (GE), Ser-190, 213–215 (SLH), and Asn-289. Residue Cys-332 is the S-methylcysteine intermediate of the active site.

This sequence belongs to the radical SAM superfamily. RlmN family. [4Fe-4S] cluster serves as cofactor.

It localises to the cytoplasm. It carries out the reaction adenosine(2503) in 23S rRNA + 2 reduced [2Fe-2S]-[ferredoxin] + 2 S-adenosyl-L-methionine = 2-methyladenosine(2503) in 23S rRNA + 5'-deoxyadenosine + L-methionine + 2 oxidized [2Fe-2S]-[ferredoxin] + S-adenosyl-L-homocysteine. The enzyme catalyses adenosine(37) in tRNA + 2 reduced [2Fe-2S]-[ferredoxin] + 2 S-adenosyl-L-methionine = 2-methyladenosine(37) in tRNA + 5'-deoxyadenosine + L-methionine + 2 oxidized [2Fe-2S]-[ferredoxin] + S-adenosyl-L-homocysteine. Its function is as follows. Specifically methylates position 2 of adenine 2503 in 23S rRNA and position 2 of adenine 37 in tRNAs. In Carboxydothermus hydrogenoformans (strain ATCC BAA-161 / DSM 6008 / Z-2901), this protein is Probable dual-specificity RNA methyltransferase RlmN.